The primary structure comprises 673 residues: ATP-dependent zinc metalloprotease FtsH (673 aa).

Residues 1–7 (MNGFFKN) are Cytoplasmic-facing. A helical transmembrane segment spans residues 8–28 (LSLWLVIGLLMVMLFNLFNSP). Over 29–100 (QGPGQSITFS…DVREPEGTPM (72 aa)) the chain is Periplasmic. A helical membrane pass occupies residues 101–121 (LMQILISWFPMLLLIAVWIYF). Residues 122 to 673 (MRQMQSGGGR…DTPEGDDKDR (552 aa)) are Cytoplasmic-facing. 194 to 201 (GPPGTGKT) provides a ligand contact to ATP. H416 lines the Zn(2+) pocket. E417 is a catalytic residue. H420 and D492 together coordinate Zn(2+). The interval 601–673 (ALKPLKKKDE…DTPEGDDKDR (73 aa)) is disordered. A compositionally biased stretch (polar residues) spans 648 to 660 (STRTATEASTQEV). Residues 661 to 673 (VSKDTPEGDDKDR) are compositionally biased toward basic and acidic residues.

It in the central section; belongs to the AAA ATPase family. The protein in the C-terminal section; belongs to the peptidase M41 family. As to quaternary structure, homohexamer. The cofactor is Zn(2+).

The protein resides in the cell inner membrane. In terms of biological role, acts as a processive, ATP-dependent zinc metallopeptidase for both cytoplasmic and membrane proteins. Plays a role in the quality control of integral membrane proteins. The polypeptide is ATP-dependent zinc metalloprotease FtsH (Magnetococcus marinus (strain ATCC BAA-1437 / JCM 17883 / MC-1)).